Reading from the N-terminus, the 511-residue chain is 2'-acyl-2-O-sulfo-trehalose (hydroxy)phthioceranyltransferase PapA1 (511 aa).

The protein belongs to the PapA acyltransferase family.

It carries out the reaction a (hydroxy)phthioceranyl-[(hydroxy)phthioceranic acid synthase] + 2'-palmitoyl/stearoyl-2-O-sulfo-alpha,alpha-trehalose = a 3'-(hydroxy)phthioceranyl-2'-palmitoyl/stearoyl-2-O-sulfo-alpha,alpha-trehalose + holo-[(hydroxy)phthioceranic acid synthase].. Catalyzes the acylation of trehalose-2-sulfate-2'-palmitate (SL659) by adding the (hydroxy)phthioceranoyl group at the 3'-position to yield the diacylated intermediate 2-palmitoyl-3-(C43)-phthioceranyl-alpha, alpha'-D-trehalose-2'-sulfate (SL1278). The chain is 2'-acyl-2-O-sulfo-trehalose (hydroxy)phthioceranyltransferase PapA1 (papA1) from Mycobacterium bovis (strain BCG / Pasteur 1173P2).